Consider the following 525-residue polypeptide: MGTISLCIGVCAFEGANTSTSFYKLVYTAILSYSIQDLLPEQDMKDLCQKVTLTRHRSWGLDNLHLVKDWRTVNEGKGQKEYCNRLTQCSSTKSKIFQCIECGRNFSWRSILTEHKRIHTGEKPYKCEECGKVFNRCSNLTKHKRIHTGEKPYKCDECGKVFNWWSQLTNHKKIHTGEKPYKCDECDKVFNWWSQLTSHKKIHSGEKPYPCEECGKAFTQFSNLTQHKRIHTGEKPYKCKECCKAFNKFSNLTQHKRIHTGEKPYKCEECGNVFNECSHLTRHRRIHTGEKPYKCEECGKAFTQFASLTRHKRIHTGEKPYQCEECGKTFNRCSHLSSHKRIHTGEKPYKCEECGRTFTQFSNLTQHKRIHTGEKPYKCKECGKAFNKFSSLTQHRRIHTGVKPYKCEECGKVFKQCSHLTSHKRIHTGEKPYKCKECGKAFYQSSILSKHKRIHTEEKPYKCEECGKAFNQFSSLTRHKRIHTGEKRYKCKECGKGFYQSSIHSKYKRIYTGEEPDKCKKCGSL.

C2H2-type zinc fingers lie at residues 97 to 119, 125 to 147, 153 to 175, 181 to 203, 209 to 231, 237 to 259, 265 to 287, 293 to 315, 321 to 343, 349 to 371, 377 to 399, 405 to 427, 433 to 455, and 461 to 483; these read FQCI…KRIH, YKCE…KRIH, YKCD…KKIH, YPCE…KRIH, YKCK…KRIH, YKCE…RRIH, YQCE…KRIH, and YKCK…RRIH. The C2H2-type 15; degenerate zinc-finger motif lies at 489–511; sequence YKCKECGKGFYQSSIHSKYKRIY.

It belongs to the krueppel C2H2-type zinc-finger protein family.

It localises to the nucleus. May be involved in transcriptional regulation. This Homo sapiens (Human) protein is Zinc finger protein 678 (ZNF678).